We begin with the raw amino-acid sequence, 446 residues long: Oxysterols receptor LXR-beta (446 aa).

Low complexity predominate over residues 1-28 (MSSPTSSLDTPLPGNGSPQPSTSSTSPT). Positions 1–69 (MSSPTSSLDT…PERKRKKGPA (69 aa)) are disordered. The tract at residues 1–76 (MSSPTSSLDT…GPAPKMLGHE (76 aa)) is transactivation AF-1; required for ligand-independent transactivation function. Positions 75-152 (HELCRVCGDK…AGMREQCVLS (78 aa)) form a DNA-binding region, nuclear receptor. NR C4-type zinc fingers lie at residues 78–98 (CRVC…CEGC) and 116–140 (CRGS…LRKC). The interval 160–201 (KIQKQQQQQPPPPTEPASGSSARPAASPGTSEASSQGSGEGE) is disordered. The segment covering 175-196 (PASGSSARPAASPGTSEASSQG) has biased composition (low complexity). Residues 205–446 (LTAAQELMIQ…LLSEIWDVHE (242 aa)) form a transactivation AF-2; required for ligand-dependent transactivation function; mediates interaction with CCAR2 region. Residues 208–446 (AQELMIQQLV…LLSEIWDVHE (239 aa)) form the NR LBD domain. Residues Lys395 and Lys433 each participate in a glycyl lysine isopeptide (Lys-Gly) (interchain with G-Cter in SUMO2) cross-link.

Belongs to the nuclear hormone receptor family. NR1 subfamily. Forms a heterodimer with RXR. Interacts with CCAR2 (via N-terminus) in a ligand-independent manner. Interacts (when sumoylated) with GPS2; interaction with GPS2 onto hepatic acute phase protein promoters prevents N-Cor corepressor complex dissociation. Interacts with ABCA12 and ABCA1; this interaction is required for ABCA1 localization to the cell surface and is necessary for its normal activity and stability. Sumoylated by SUMO2 at Lys-395 and Lys-433 during the hepatic acute phase response, leading to promote interaction with GPS2 and prevent N-Cor corepressor complex dissociation.

Its subcellular location is the nucleus. In terms of biological role, nuclear receptor that exhibits a ligand-dependent transcriptional activation activity. Binds preferentially to double-stranded oligonucleotide direct repeats having the consensus half-site sequence 5'-AGGTCA-3' and 4-nt spacing (DR-4). Regulates cholesterol uptake through MYLIP-dependent ubiquitination of LDLR, VLDLR and LRP8; DLDLR and LRP8. Interplays functionally with RORA for the regulation of genes involved in liver metabolism. Induces LPCAT3-dependent phospholipid remodeling in endoplasmic reticulum (ER) membranes of hepatocytes, driving SREBF1 processing and lipogenesis. Via LPCAT3, triggers the incorporation of arachidonate into phosphatidylcholines of ER membranes, increasing membrane dynamics and enabling triacylglycerols transfer to nascent very low-density lipoprotein (VLDL) particles. Via LPCAT3 also counteracts lipid-induced ER stress response and inflammation, likely by modulating SRC kinase membrane compartmentalization and limiting the synthesis of lipid inflammatory mediators. Plays an anti-inflammatory role during the hepatic acute phase response by acting as a corepressor: inhibits the hepatic acute phase response by preventing dissociation of the N-Cor corepressor complex. The chain is Oxysterols receptor LXR-beta (Nr1h2) from Rattus norvegicus (Rat).